The primary structure comprises 488 residues: MAESILDRTINRFWYNLGEDCLSESQFDLMIRLMEESLDGDQIIDLTSLPSDNLQVEQVMTTTDDSISEESEFLLAIGEISEDESDSGEEPEFEQVRMDRTGGTEIPKEEDGEGPSRYNERKRKTPEDRYFPTQPKTIPGQKQTSMGMLNIDCQINRRTLIDDWAAEIGLIVKTNREDYLDPETILLLMEHKTSGIAKELIRNTRWNRTTGDIIEQVINAMYTMFLGLNYSDNKVAEKIDEQEKAKIRMTKLQLFDICYLEEFTCDYEKNMYKTEMADFPGYINQYLSKIPIIGEKALTRFRHEANGTSIYSLGFAAKIVKEELSKICDLSKKQKKLKKFNKKCCSIGEASVEYGGKKTSKKKYHKRYKKRYKVYKPYKKKKKFRSGKYFKPKEKKGSKRKYCPKGKKDCRCWICNIEGHYANECPNRQSSEKAHILQQAENLGLQPVEEPYEGVQEVFILEYKEEEEETSTEESDDESSTSEDSDSD.

Residues 80-93 (ISEDESDSGEEPEF) are compositionally biased toward acidic residues. A disordered region spans residues 80–143 (ISEDESDSGE…QPKTIPGQKQ (64 aa)). The span at 94 to 109 (EQVRMDRTGGTEIPKE) shows a compositional bias: basic and acidic residues. The Nuclear localization signal signature appears at 121 to 124 (RKRK). Over residues 134 to 143 (QPKTIPGQKQ) the composition is skewed to polar residues. Residues 410 to 427 (CRCWICNIEGHYANECPN) form a CCHC-type zinc finger. Positions 463–488 (YKEEEEETSTEESDDESSTSEDSDSD) are disordered. A compositionally biased stretch (acidic residues) spans 464 to 488 (KEEEEETSTEESDDESSTSEDSDSD).

Belongs to the caulimoviridae capsid protein family. As to quaternary structure, interacts (via nuclear localization signal) with host importin alpha.

It is found in the virion. The protein resides in the host nucleus. In terms of biological role, self assembles to form an icosahedral capsid, about 50 nm in diameter, nm, composed of 420 subunits of the viral capsid protein. The capsid encapsulates the genomic dsDNA. Following virus entry into host cell, provides nuclear import of the viral genome. Virus particles do not enter the nucleus, but dock at the nuclear membrane through the interaction with host importins. The polypeptide is Capsid protein (Arabidopsis thaliana (Mouse-ear cress)).